The chain runs to 260 residues: uncharacterized protein (260 aa).

This sequence belongs to the methyltransferase superfamily.

Its subcellular location is the cytoplasm. It localises to the nucleus. Probable methyltransferase. This is an uncharacterized protein from Schizosaccharomyces pombe (strain 972 / ATCC 24843) (Fission yeast).